Consider the following 176-residue polypeptide: Peroxynitrite isomerase 1 (176 aa).

The tract at residues M1–P23 is disordered. Residues S8–A20 show a composition bias toward low complexity. Residues G37–G43 carry the GXWXGXG motif. H168 contacts heme b.

Belongs to the nitrobindin family. In terms of assembly, homodimer. The cofactor is heme b.

The enzyme catalyses peroxynitrite = nitrate. It functions in the pathway nitrogen metabolism. In terms of biological role, heme-binding protein able to scavenge peroxynitrite and to protect free L-tyrosine against peroxynitrite-mediated nitration, by acting as a peroxynitrite isomerase that converts peroxynitrite to nitrate. Therefore, this protein likely plays a role in peroxynitrite sensing and in the detoxification of reactive nitrogen and oxygen species (RNS and ROS, respectively). Is able to bind nitric oxide (NO) in vitro, but may act as a sensor of peroxynitrite levels in vivo. The sequence is that of Peroxynitrite isomerase 1 from Rhodococcus jostii (strain RHA1).